The chain runs to 110 residues: Acylphosphatase (110 aa).

The Acylphosphatase-like domain maps to 21-108; sequence TRRYLVTGRV…TNLKSFRIEG (88 aa). Residues Arg-36 and Asn-54 contribute to the active site.

This sequence belongs to the acylphosphatase family.

The catalysed reaction is an acyl phosphate + H2O = a carboxylate + phosphate + H(+). This is Acylphosphatase (acyP) from Koribacter versatilis (strain Ellin345).